A 179-amino-acid polypeptide reads, in one-letter code: Large ribosomal subunit protein uL6 (179 aa).

This sequence belongs to the universal ribosomal protein uL6 family. As to quaternary structure, part of the 50S ribosomal subunit.

This protein binds to the 23S rRNA, and is important in its secondary structure. It is located near the subunit interface in the base of the L7/L12 stalk, and near the tRNA binding site of the peptidyltransferase center. In Treponema pallidum (strain Nichols), this protein is Large ribosomal subunit protein uL6.